The primary structure comprises 426 residues: Serine--tRNA ligase (426 aa).

227–229 (TSE) serves as a coordination point for L-serine. ATP is bound by residues 258-260 (RKE) and Val-274. Residue Glu-281 coordinates L-serine. Position 345–348 (345–348 (ELTS)) interacts with ATP. Thr-380 provides a ligand contact to L-serine.

The protein belongs to the class-II aminoacyl-tRNA synthetase family. Type-1 seryl-tRNA synthetase subfamily. Homodimer. The tRNA molecule binds across the dimer.

It localises to the cytoplasm. The enzyme catalyses tRNA(Ser) + L-serine + ATP = L-seryl-tRNA(Ser) + AMP + diphosphate + H(+). It catalyses the reaction tRNA(Sec) + L-serine + ATP = L-seryl-tRNA(Sec) + AMP + diphosphate + H(+). The protein operates within aminoacyl-tRNA biosynthesis; selenocysteinyl-tRNA(Sec) biosynthesis; L-seryl-tRNA(Sec) from L-serine and tRNA(Sec): step 1/1. Catalyzes the attachment of serine to tRNA(Ser). Is also able to aminoacylate tRNA(Sec) with serine, to form the misacylated tRNA L-seryl-tRNA(Sec), which will be further converted into selenocysteinyl-tRNA(Sec). In Clavibacter sepedonicus (Clavibacter michiganensis subsp. sepedonicus), this protein is Serine--tRNA ligase.